We begin with the raw amino-acid sequence, 721 residues long: Polyribonucleotide nucleotidyltransferase (721 aa).

Mg(2+) is bound by residues Asp490 and Asp496. Residues 557–618 (PRILTLKINP…EAVRQKIEGL (62 aa)) enclose the KH domain. The S1 motif domain occupies 625–693 (GEEYEGTVVK…DRGKIDLIRP (69 aa)). Residues 696-721 (EGKIAPREPRAARAGGDRGGRPPRRE) are disordered.

It belongs to the polyribonucleotide nucleotidyltransferase family. Requires Mg(2+) as cofactor.

The protein resides in the cytoplasm. It catalyses the reaction RNA(n+1) + phosphate = RNA(n) + a ribonucleoside 5'-diphosphate. In terms of biological role, involved in mRNA degradation. Catalyzes the phosphorolysis of single-stranded polyribonucleotides processively in the 3'- to 5'-direction. The polypeptide is Polyribonucleotide nucleotidyltransferase (Deinococcus geothermalis (strain DSM 11300 / CIP 105573 / AG-3a)).